The primary structure comprises 380 residues: SAM and SH3 domain-containing protein 3 (380 aa).

The interval 1–174 (MLRRKPSNAS…STAPQYTGPF (174 aa)) is disordered. The span at 22–41 (LQRSSSFKDFAKSKPSSPVV) shows a compositional bias: low complexity. Serine 27, serine 34, and serine 42 each carry phosphoserine. At threonine 61 the chain carries Phosphothreonine. A compositionally biased stretch (basic residues) spans 84 to 93 (MNRKTGKKMV). Serine 97 carries the phosphoserine modification. Threonine 103 is modified (phosphothreonine). At serine 110 the chain carries Phosphoserine. Phosphothreonine is present on threonine 112. A phosphoserine mark is found at serine 113 and serine 120. Residues 143-158 (RQASTGSELCSPSPGS) show a composition bias toward polar residues. The SH3 domain occupies 173–234 (PFCGRARVHT…KFIYVDVLPE (62 aa)). One can recognise an SAM domain in the interval 252–316 (PKPKTLHELL…LTAAELLLDY (65 aa)). Threonine 318 is modified (phosphothreonine). Residues 318–327 (TGSEEAEEGT) are compositionally biased toward acidic residues. Residues 318 to 380 (TGSEEAEEGT…LHGLSLSGAP (63 aa)) are disordered. At serine 320 the chain carries Phosphoserine.

It belongs to the SASH family.

May function as a signaling adapter protein in lymphocytes. In Bos taurus (Bovine), this protein is SAM and SH3 domain-containing protein 3.